The primary structure comprises 307 residues: Oxygen-dependent coproporphyrinogen-III oxidase (307 aa).

Ser94 lines the substrate pocket. Residues His98 and His108 each contribute to the a divalent metal cation site. The active-site Proton donor is the His108. Residue 110-112 (NVR) coordinates substrate. The a divalent metal cation site is built by His147 and His177. The important for dimerization stretch occupies residues 242–277 (YVEFNLVWDRGTLFGLQSGGRTESILMSMPPLAQWQ). Residue 260–262 (GGR) coordinates substrate.

It belongs to the aerobic coproporphyrinogen-III oxidase family. In terms of assembly, homodimer. Requires a divalent metal cation as cofactor.

Its subcellular location is the cytoplasm. The enzyme catalyses coproporphyrinogen III + O2 + 2 H(+) = protoporphyrinogen IX + 2 CO2 + 2 H2O. Its pathway is porphyrin-containing compound metabolism; protoporphyrin-IX biosynthesis; protoporphyrinogen-IX from coproporphyrinogen-III (O2 route): step 1/1. Involved in the heme biosynthesis. Catalyzes the aerobic oxidative decarboxylation of propionate groups of rings A and B of coproporphyrinogen-III to yield the vinyl groups in protoporphyrinogen-IX. The sequence is that of Oxygen-dependent coproporphyrinogen-III oxidase from Chromohalobacter salexigens (strain ATCC BAA-138 / DSM 3043 / CIP 106854 / NCIMB 13768 / 1H11).